Consider the following 420-residue polypeptide: Probable pectate lyase C (420 aa).

Residues Met1–Ala20 form the signal peptide. 3 N-linked (GlcNAc...) asparagine glycosylation sites follow: Asn49, Asn165, and Asn202. Arg205 is a catalytic residue. One can recognise an EF-hand domain in the interval Asn262–Met297. Residues Asp275, Asp277, Asp279, Gln281, and Glu286 each contribute to the Ca(2+) site. The disordered stretch occupies residues Thr358–Ser396. A glycan (N-linked (GlcNAc...) asparagine) is linked at Asn394.

Belongs to the polysaccharide lyase 1 family. Ca(2+) is required as a cofactor.

Its subcellular location is the secreted. The enzyme catalyses Eliminative cleavage of (1-&gt;4)-alpha-D-galacturonan to give oligosaccharides with 4-deoxy-alpha-D-galact-4-enuronosyl groups at their non-reducing ends.. In terms of biological role, pectinolytic enzyme consist of four classes of enzymes: pectin lyase, polygalacturonase, pectin methylesterase and rhamnogalacturonase. Among pectinolytic enzymes, pectin lyase is the most important in depolymerization of pectin, since it cleaves internal glycosidic bonds of highly methylated pectins. Favors pectate, the anion, over pectin, the methyl ester. In Aspergillus fumigatus (strain ATCC MYA-4609 / CBS 101355 / FGSC A1100 / Af293) (Neosartorya fumigata), this protein is Probable pectate lyase C (plyC).